The following is a 364-amino-acid chain: Anthranilate phosphoribosyltransferase 1 (364 aa).

5-phospho-alpha-D-ribose 1-diphosphate contacts are provided by residues glycine 102, 105 to 106, threonine 110, 112 to 115, 130 to 138, and serine 142; these read GD, NIST, and KHGNRSASS. Position 102 (glycine 102) interacts with anthranilate. Serine 114 contributes to the Mg(2+) binding site. Asparagine 133 is an anthranilate binding site. Arginine 188 contributes to the anthranilate binding site. Positions 247 and 248 each coordinate Mg(2+).

The protein belongs to the anthranilate phosphoribosyltransferase family. In terms of assembly, homodimer. Mg(2+) is required as a cofactor.

The enzyme catalyses N-(5-phospho-beta-D-ribosyl)anthranilate + diphosphate = 5-phospho-alpha-D-ribose 1-diphosphate + anthranilate. It functions in the pathway amino-acid biosynthesis; L-tryptophan biosynthesis; L-tryptophan from chorismate: step 2/5. Its function is as follows. Catalyzes the transfer of the phosphoribosyl group of 5-phosphorylribose-1-pyrophosphate (PRPP) to anthranilate to yield N-(5'-phosphoribosyl)-anthranilate (PRA). In Nostoc sp. (strain PCC 7120 / SAG 25.82 / UTEX 2576), this protein is Anthranilate phosphoribosyltransferase 1.